The sequence spans 1548 residues: Zinc finger MYM-type protein 4 (1548 aa).

Alanine 2 carries the post-translational modification N-acetylalanine. Phosphothreonine is present on threonine 107. Phosphoserine occurs at positions 110 and 122. Residues lysine 140 and lysine 149 each participate in a glycyl lysine isopeptide (Lys-Gly) (interchain with G-Cter in SUMO2) cross-link. Serine 162 carries the post-translational modification Phosphoserine. Positions serine 162 to aspartate 189 are disordered. A Glycyl lysine isopeptide (Lys-Gly) (interchain with G-Cter in SUMO2) cross-link involves residue lysine 195. Serine 197 carries the phosphoserine modification. Glycyl lysine isopeptide (Lys-Gly) (interchain with G-Cter in SUMO2) cross-links involve residues lysine 201 and lysine 232. Serine 242 carries the phosphoserine modification. Lysine 250 is covalently cross-linked (Glycyl lysine isopeptide (Lys-Gly) (interchain with G-Cter in SUMO1); alternate). Residue lysine 250 forms a Glycyl lysine isopeptide (Lys-Gly) (interchain with G-Cter in SUMO2); alternate linkage. Glycyl lysine isopeptide (Lys-Gly) (interchain with G-Cter in SUMO2) cross-links involve residues lysine 260, lysine 271, lysine 273, lysine 289, lysine 327, lysine 400, lysine 428, and lysine 430. 9 consecutive MYM-type zinc fingers follow at residues glutamine 362–valine 402, lysine 414–valine 457, histidine 464–glutamine 499, lysine 510–isoleucine 544, glutamate 554–leucine 592, arginine 600–glycine 631, phenylalanine 708–valine 742, lysine 749–asparagine 788, and glutamate 795–leucine 829. Serine 1030 carries the phosphoserine modification. Residues lysine 1035 and lysine 1061 each participate in a glycyl lysine isopeptide (Lys-Gly) (interchain with G-Cter in SUMO2) cross-link. Serine 1064 and serine 1071 each carry phosphoserine. Glycyl lysine isopeptide (Lys-Gly) (interchain with G-Cter in SUMO2) cross-links involve residues lysine 1080 and lysine 1127. Basic and acidic residues predominate over residues serine 1124–threonine 1134. 2 disordered regions span residues serine 1124–valine 1183 and lysine 1231–serine 1260. A compositionally biased stretch (basic residues) spans serine 1160 to serine 1181. Residues serine 1181 and serine 1256 each carry the phosphoserine modification. The segment covering glutamine 1237–serine 1260 has biased composition (polar residues). Lysine 1431 participates in a covalent cross-link: Glycyl lysine isopeptide (Lys-Gly) (interchain with G-Cter in SUMO2). Phosphoserine occurs at positions 1539, 1542, and 1547.

As to expression, expressed at higher level in heart, skeletal muscle, kidney and liver.

Functionally, plays a role in the regulation of cell morphology and cytoskeletal organization. This is Zinc finger MYM-type protein 4 (ZMYM4) from Homo sapiens (Human).